The chain runs to 171 residues: Adenine phosphoribosyltransferase (171 aa).

The protein belongs to the purine/pyrimidine phosphoribosyltransferase family. Homodimer.

The protein resides in the cytoplasm. The catalysed reaction is AMP + diphosphate = 5-phospho-alpha-D-ribose 1-diphosphate + adenine. It functions in the pathway purine metabolism; AMP biosynthesis via salvage pathway; AMP from adenine: step 1/1. Its function is as follows. Catalyzes a salvage reaction resulting in the formation of AMP, that is energically less costly than de novo synthesis. In Pelotomaculum thermopropionicum (strain DSM 13744 / JCM 10971 / SI), this protein is Adenine phosphoribosyltransferase.